Here is a 309-residue protein sequence, read N- to C-terminus: Diadenylate cyclase (309 aa).

Positions 144-301 constitute a DAC domain; it reads TITLYELFET…DGKIVFETDP (158 aa).

It belongs to the adenylate cyclase family. DacZ subfamily. Requires Mn(2+) as cofactor.

It carries out the reaction 2 ATP = 3',3'-c-di-AMP + 2 diphosphate. In terms of biological role, diadenylate cyclase that catalyzes the condensation of 2 ATP molecules into cyclic di-AMP (c-di-AMP). c-di-AMP is a second messenger for intracellular signal transduction involved in the control of important regulatory processes such as osmoregulation. The chain is Diadenylate cyclase from Methanocaldococcus jannaschii (strain ATCC 43067 / DSM 2661 / JAL-1 / JCM 10045 / NBRC 100440) (Methanococcus jannaschii).